The chain runs to 216 residues: 3-keto-L-gulonate-6-phosphate decarboxylase UlaD (216 aa).

Position 11 (Asp-11) interacts with substrate. Mg(2+)-binding residues include Glu-33 and Asp-62. Arg-192 lines the substrate pocket.

It belongs to the HPS/KGPDC family. KGPDC subfamily. In terms of assembly, homodimer. Mg(2+) serves as cofactor.

The enzyme catalyses 3-dehydro-L-gulonate 6-phosphate + H(+) = L-xylulose 5-phosphate + CO2. Its pathway is cofactor degradation; L-ascorbate degradation; D-xylulose 5-phosphate from L-ascorbate: step 2/4. Catalyzes the decarboxylation of 3-keto-L-gulonate-6-P into L-xylulose-5-P. Is involved in the anaerobic L-ascorbate utilization. The protein is 3-keto-L-gulonate-6-phosphate decarboxylase UlaD of Salmonella typhi.